Here is a 257-residue protein sequence, read N- to C-terminus: Nopaline permease ATP-binding protein P (257 aa).

Residues 8–253 (LVAEDVHKNF…PTSPRCRAFL (246 aa)) enclose the ABC transporter domain. 40 to 47 (GSSGSGKS) serves as a coordination point for ATP.

It belongs to the ABC transporter superfamily.

It is found in the cell inner membrane. In terms of biological role, component of the nopaline active transport system probably consisting of four subunits: Q, M, P and T. This system is also capable of transporting octopine provided that catabolic functions are induced with nopaline. This Agrobacterium fabrum (strain C58 / ATCC 33970) (Agrobacterium tumefaciens (strain C58)) protein is Nopaline permease ATP-binding protein P (nocP).